We begin with the raw amino-acid sequence, 306 residues long: ADP,ATP carrier protein ER-ANT1 (306 aa).

Solcar repeat units follow at residues E8–L101, K113–I205, and G213–I299. The next 5 membrane-spanning stretches (helical) occupy residues F10–L37, Q78–L102, Y111–L131, F181–I202, and L216–F236. R83 and K95 together coordinate ADP. R240 lines the ADP pocket. The important for transport activity stretch occupies residues R240 to L245. The Nucleotide carrier signature motif signature appears at R240 to L245. Residues V276–L296 form a helical membrane-spanning segment.

The protein belongs to the mitochondrial carrier (TC 2.A.29) family.

It localises to the endoplasmic reticulum membrane. It catalyses the reaction ADP(in) + ATP(out) = ADP(out) + ATP(in). Its function is as follows. ADP:ATP antiporter that catalyzes the exchange of ADP and ATP across the endoplasmic reticulum membrane. The chain is ADP,ATP carrier protein ER-ANT1 (ER-ANT1) from Arabidopsis thaliana (Mouse-ear cress).